We begin with the raw amino-acid sequence, 67 residues long: Beta-defensin 123 (67 aa).

The signal sequence occupies residues 1–20 (MKLLLLTLTVLLLLSQLTPG). Disulfide bonds link C25-C52, C32-C46, and C36-C53.

The protein belongs to the beta-defensin family. Abundant expression in the male reproductive tract only. Expressed abundantly in testis, while expression in epididymis decreased gradually from caput to cauda.

It is found in the secreted. Functionally, has antibacterial activity. The chain is Beta-defensin 123 (DEFB123) from Macaca mulatta (Rhesus macaque).